The primary structure comprises 133 residues: MVVSFVSICGLLLIFNLPLSTSFPVLSDTDVDVLEAILHKLEESMSEETEEDQMVPANSESLEPVGSMKQTANRDQIRPVEVEAIREFLSANTRKNVQNDSSRRSSSCFGRRMDRIGSMSSLGCNTVGKYNPK.

An N-terminal signal peptide occupies residues 1-22 (MVVSFVSICGLLLIFNLPLSTS). Residues 44–53 (SMSEETEEDQ) show a composition bias toward acidic residues. 2 disordered regions span residues 44–76 (SMSEETEEDQMVPANSESLEPVGSMKQTANRDQ) and 93–112 (TRKNVQNDSSRRSSSCFGRR). Residues Cys-108 and Cys-124 are joined by a disulfide bond.

Belongs to the natriuretic peptide family.

It localises to the secreted. Its function is as follows. Cardiac hormone which may function as a paracrine antifibrotic factor in the heart. Also plays a key role in cardiovascular homeostasis through natriuresis, diuresis, vasorelaxation, and inhibition of renin and aldosterone secretion. Has a cGMP-stimulating activity. This chain is Brain natriuretic peptide (nppb), found in Takifugu rubripes (Japanese pufferfish).